Consider the following 623-residue polypeptide: tRNA 5-methylaminomethyl-2-thiouridine biosynthesis bifunctional protein MnmC (623 aa).

The interval 1 to 244 (MCVSSSIQTA…KREMLKAIWP (244 aa)) is tRNA (mnm(5)s(2)U34)-methyltransferase. The tract at residues 268 to 623 (IGAGIAGLHC…VKIKKPYYSS (356 aa)) is FAD-dependent cmnm(5)s(2)U34 oxidoreductase.

In the N-terminal section; belongs to the methyltransferase superfamily. tRNA (mnm(5)s(2)U34)-methyltransferase family. This sequence in the C-terminal section; belongs to the DAO family. FAD serves as cofactor.

The protein resides in the cytoplasm. It carries out the reaction 5-aminomethyl-2-thiouridine(34) in tRNA + S-adenosyl-L-methionine = 5-methylaminomethyl-2-thiouridine(34) in tRNA + S-adenosyl-L-homocysteine + H(+). In terms of biological role, catalyzes the last two steps in the biosynthesis of 5-methylaminomethyl-2-thiouridine (mnm(5)s(2)U) at the wobble position (U34) in tRNA. Catalyzes the FAD-dependent demodification of cmnm(5)s(2)U34 to nm(5)s(2)U34, followed by the transfer of a methyl group from S-adenosyl-L-methionine to nm(5)s(2)U34, to form mnm(5)s(2)U34. The sequence is that of tRNA 5-methylaminomethyl-2-thiouridine biosynthesis bifunctional protein MnmC from Acinetobacter baylyi (strain ATCC 33305 / BD413 / ADP1).